A 260-amino-acid polypeptide reads, in one-letter code: Multiple myeloma tumor-associated protein 2 homolog (260 aa).

The segment covering 1 to 11 (MFGSNRGGVRG) has biased composition (gly residues). Residues 1–21 (MFGSNRGGVRGGQDQFNWEDV) are disordered. Glycyl lysine isopeptide (Lys-Gly) (interchain with G-Cter in SUMO2) cross-links involve residues lysine 22, lysine 104, and lysine 113. Residues 106 to 116 (EGGDPEEKGVD) are compositionally biased toward basic and acidic residues. Disordered regions lie at residues 106–133 (EGGDPEEKGVDRLLGLGSASGSAGRVAL) and 146–260 (SVFT…SSDD). The segment covering 117 to 132 (RLLGLGSASGSAGRVA) has biased composition (low complexity). 2 positions are modified to phosphoserine: serine 123 and serine 127. Residues 170 to 182 (RAEDKVEPDAESH) show a composition bias toward basic and acidic residues. The segment covering 183 to 206 (KKSKKEKKKKKKKHKKHKKKKDKE) has biased composition (basic residues). Residues serine 215, serine 216, and serine 219 each carry the phosphoserine modification.

The chain is Multiple myeloma tumor-associated protein 2 homolog (Mmtag2) from Mus musculus (Mouse).